We begin with the raw amino-acid sequence, 249 residues long: Triosephosphate isomerase (249 aa).

N12 and K14 together coordinate substrate. K14 is modified (N6-acetyllysine). Y68 is subject to 3'-nitrotyrosine. Phosphoserine is present on residues S80 and S106. K142 is covalently cross-linked (Glycyl lysine isopeptide (Lys-Gly) (interchain with G-Cter in SUMO1)). An N6-succinyllysine modification is found at K149. N6-acetyllysine; alternate is present on K156. The residue at position 156 (K156) is an N6-succinyllysine; alternate. S159 is modified (phosphoserine). E166 functions as the Proton acceptor in the catalytic mechanism. At T173 the chain carries Phosphothreonine. K194 is subject to N6-acetyllysine; alternate. K194 is subject to N6-succinyllysine; alternate. The residue at position 194 (K194) is an N6-methyllysine; alternate. S198 carries the phosphoserine modification. The residue at position 209 (Y209) is a 3'-nitrotyrosine. Residue S212 is modified to Phosphoserine. Residue T214 is modified to Phosphothreonine. S223 carries the post-translational modification Phosphoserine. Residue K238 is modified to N6-acetyllysine.

The protein belongs to the triosephosphate isomerase family. As to quaternary structure, homodimer.

It is found in the cytoplasm. It catalyses the reaction D-glyceraldehyde 3-phosphate = dihydroxyacetone phosphate. The enzyme catalyses dihydroxyacetone phosphate = methylglyoxal + phosphate. Its pathway is carbohydrate biosynthesis; gluconeogenesis. It participates in carbohydrate degradation; glycolysis; D-glyceraldehyde 3-phosphate from glycerone phosphate: step 1/1. Functionally, triosephosphate isomerase is an extremely efficient metabolic enzyme that catalyzes the interconversion between dihydroxyacetone phosphate (DHAP) and D-glyceraldehyde-3-phosphate (G3P) in glycolysis and gluconeogenesis. In terms of biological role, it is also responsible for the non-negligible production of methylglyoxal a reactive cytotoxic side-product that modifies and can alter proteins, DNA and lipids. This is Triosephosphate isomerase from Mesocricetus auratus (Golden hamster).